The following is a 212-amino-acid chain: 3-isopropylmalate dehydratase small subunit (212 aa).

This sequence belongs to the LeuD family. LeuD type 1 subfamily. Heterodimer of LeuC and LeuD.

The catalysed reaction is (2R,3S)-3-isopropylmalate = (2S)-2-isopropylmalate. The protein operates within amino-acid biosynthesis; L-leucine biosynthesis; L-leucine from 3-methyl-2-oxobutanoate: step 2/4. Catalyzes the isomerization between 2-isopropylmalate and 3-isopropylmalate, via the formation of 2-isopropylmaleate. The polypeptide is 3-isopropylmalate dehydratase small subunit (Beutenbergia cavernae (strain ATCC BAA-8 / DSM 12333 / CCUG 43141 / JCM 11478 / NBRC 16432 / NCIMB 13614 / HKI 0122)).